A 561-amino-acid polypeptide reads, in one-letter code: Guanine nucleotide-binding protein-like 3 (561 aa).

Residues 28 to 46 (HNRKLKKAAKKQGISRKAK) are compositionally biased toward basic residues. Disordered regions lie at residues 28 to 58 (HNRK…APFK) and 76 to 110 (KEQN…KKAK). A coiled-coil region spans residues 53 to 98 (NSAPFKEEVLREAEQRKQELETLKEQNKIVKQQEKAAKRKKEKDAA). The span at 76–88 (KEQNKIVKQQEKA) shows a compositional bias: basic and acidic residues. One can recognise a CP-type G domain in the interval 133–319 (CQELNKVIEA…MIDSPGILAA (187 aa)). GTP-binding positions include 181 to 184 (NKID), 268 to 275 (GFPNVGKS), and 312 to 315 (DSPG). The segment at 486 to 532 (ATTTDAEEEKMDTTTNTDEPEAESHISSTVEPIQEPTEKRKDKPAKE) is disordered. The segment covering 521–532 (PTEKRKDKPAKE) has biased composition (basic and acidic residues).

Belongs to the TRAFAC class YlqF/YawG GTPase family.

The protein localises to the nucleus. Its subcellular location is the nucleolus. Functionally, may play a role in regulating cellular proliferation. This is Guanine nucleotide-binding protein-like 3 (gnl3) from Danio rerio (Zebrafish).